The chain runs to 548 residues: Cleavage and polyadenylation specificity factor subunit 6 (548 aa).

The 81-residue stretch at 81–161 (IALYIGNLTW…QKPIVTPCNK (81 aa)) folds into the RRM domain. The segment covering 169 to 180 (MQSRKTATQAGQ) has biased composition (polar residues). Disordered stretches follow at residues 169–401 (MQSR…MDVV) and 473–548 (LHGI…YRHR). Pro residues-rich tracts occupy residues 221 to 279 (PAGP…PPVM), 294 to 362 (PPGP…PPPG), and 373 to 384 (GPPPSDPYGRPP). Composition is skewed to basic and acidic residues over residues 385-400 (PYER…DMDV) and 490-500 (RSRERDHSRSR). The span at 501 to 511 (EKSRRHKSRSR) shows a compositional bias: basic residues. The span at 512-548 (DRHDDYYRERSRERERHRDRERDRDRERDREREYRHR) shows a compositional bias: basic and acidic residues.

The protein belongs to the RRM CPSF6/7 family. In terms of assembly, component of the cleavage factor Im (CFIm) complex.

It localises to the nucleus. The protein resides in the nucleoplasm. The protein localises to the nucleus speckle. Its subcellular location is the cytoplasm. Component of the cleavage factor Im (CFIm) complex that functions as an activator of the pre-mRNA 3'-end cleavage and polyadenylation processing required for the maturation of pre-mRNA into functional mRNAs. CFIm contributes to the recruitment of multiprotein complexes on specific sequences on the pre-mRNA 3'-end, so called cleavage and polyadenylation signals (pA signals). Most pre-mRNAs contain multiple pA signals, resulting in alternative cleavage and polyadenylation (APA) producing mRNAs with variable 3'-end formation. The CFIm complex acts as a key regulator of cleavage and polyadenylation site choice during APA through its binding to 5'-UGUA-3' elements localized in the 3'-untranslated region (UTR) for a huge number of pre-mRNAs. Plays a role in mRNA export. In Xenopus laevis (African clawed frog), this protein is Cleavage and polyadenylation specificity factor subunit 6.